Consider the following 439-residue polypeptide: Xaa-Pro dipeptidase (439 aa).

The Mn(2+) site is built by aspartate 244, aspartate 255, histidine 335, glutamate 380, and glutamate 419.

Belongs to the peptidase M24B family. Bacterial-type prolidase subfamily. Mn(2+) is required as a cofactor.

The enzyme catalyses Xaa-L-Pro dipeptide + H2O = an L-alpha-amino acid + L-proline. Functionally, splits dipeptides with a prolyl residue in the C-terminal position. This chain is Xaa-Pro dipeptidase, found in Shewanella sp. (strain MR-4).